We begin with the raw amino-acid sequence, 237 residues long: 1-(5-phosphoribosyl)-5-[(5-phosphoribosylamino)methylideneamino] imidazole-4-carboxamide isomerase (237 aa).

The Proton acceptor role is filled by Asp-8. Catalysis depends on Asp-130, which acts as the Proton donor.

Belongs to the HisA/HisF family.

The protein localises to the cytoplasm. The enzyme catalyses 1-(5-phospho-beta-D-ribosyl)-5-[(5-phospho-beta-D-ribosylamino)methylideneamino]imidazole-4-carboxamide = 5-[(5-phospho-1-deoxy-D-ribulos-1-ylimino)methylamino]-1-(5-phospho-beta-D-ribosyl)imidazole-4-carboxamide. The protein operates within amino-acid biosynthesis; L-histidine biosynthesis; L-histidine from 5-phospho-alpha-D-ribose 1-diphosphate: step 4/9. The sequence is that of 1-(5-phosphoribosyl)-5-[(5-phosphoribosylamino)methylideneamino] imidazole-4-carboxamide isomerase from Caldicellulosiruptor bescii (strain ATCC BAA-1888 / DSM 6725 / KCTC 15123 / Z-1320) (Anaerocellum thermophilum).